Consider the following 344-residue polypeptide: Arylacetonitrilase (344 aa).

In terms of domain architecture, CN hydrolase spans 5–290 (LRVAVTQAEP…EGIVYADLDL (286 aa)). The active-site Proton acceptor is E45. K126 is a catalytic residue. Residue C167 is the Nucleophile of the active site. Residues 324-344 (VIPRDEEEPSRKANVVVPKQE) are disordered.

Belongs to the carbon-nitrogen hydrolase superfamily. Nitrilase family.

The enzyme catalyses a nitrile + 2 H2O = a carboxylate + NH4(+). It carries out the reaction 4-chlorophenylacetonitrile + 2 H2O = 4-chlorophenylacetate + NH4(+). In terms of biological role, nitrilase that hydrolyzes preferentially phenylacetonitrile and (R,S)-mandelonitrile. Also acts on dinitriles like phenylenediacetonitriles (PDAs) 1,2-PDA, 1,3-PDA, and 1,4-PDA, and cyanophenyl acetonitriles (CPAs) 2-CPA and 4-CPA. This chain is Arylacetonitrilase, found in Macrophomina phaseolina (strain MS6) (Charcoal rot fungus).